A 697-amino-acid polypeptide reads, in one-letter code: PAN2-PAN3 deadenylation complex subunit PAN3 (697 aa).

Residues Thr-7–Gln-36 form a C3H1-type zinc finger. The segment at Gln-40 to Ala-67 is disordered. Short sequence motifs (PABPC-interacting motif-2 (PAM-2)) lie at residues Leu-69–Leu-89 and Phe-106–Pro-126. Positions Phe-106–Pro-240 are disordered. Residues Asp-119–Asp-153 are compositionally biased toward polar residues. Positions Gln-172–Gln-187 are enriched in low complexity. Residues Gly-212–Phe-224 are compositionally biased toward polar residues. Positions Gln-308 to Thr-576 are pseudokinase domain. Residues Arg-361, Asp-416 to Ser-423, and Ser-470 to Lys-471 each bind ATP. Positions Pro-577–Tyr-615 form a coiled coil. The tract at residues Leu-616–Glu-697 is knob domain.

It belongs to the protein kinase superfamily. PAN3 family. As to quaternary structure, homodimer. Forms a heterotrimer with a catalytic subunit PAN2 to form the poly(A)-nuclease (PAN) deadenylation complex. Interacts (via PAM-2 motif) with poly(A)-binding protein PAB1 (via PABC domain), conferring substrate specificity of the enzyme complex.

Its subcellular location is the cytoplasm. In terms of biological role, regulatory subunit of the poly(A)-nuclease (PAN) deadenylation complex, one of two cytoplasmic mRNA deadenylases involved in mRNA turnover. PAN specifically shortens poly(A) tails of RNA and the activity is stimulated by poly(A)-binding protein PAB1. PAN deadenylation is followed by rapid degradation of the shortened mRNA tails by the CCR4-NOT complex. Deadenylated mRNAs are then degraded by two alternative mechanisms, namely exosome-mediated 3'-5' exonucleolytic degradation, or deadenylation-dependent mRNA decaping and subsequent 5'-3' exonucleolytic degradation by XRN1. May also be involved in post-transcriptional maturation of mRNA poly(A) tails. PAN3 acts as a positive regulator for PAN activity, recruiting the catalytic subunit PAN2 to mRNA via its interaction with RNA and with PAB1. The sequence is that of PAN2-PAN3 deadenylation complex subunit PAN3 from Candida albicans (strain SC5314 / ATCC MYA-2876) (Yeast).